A 136-amino-acid polypeptide reads, in one-letter code: Large-conductance mechanosensitive channel (136 aa).

2 consecutive transmembrane segments (helical) span residues 9–29 and 79–99; these read AFAS…GAAF and IQTV…LKAI.

It belongs to the MscL family. In terms of assembly, homopentamer.

Its subcellular location is the cell inner membrane. Functionally, channel that opens in response to stretch forces in the membrane lipid bilayer. May participate in the regulation of osmotic pressure changes within the cell. This is Large-conductance mechanosensitive channel from Shewanella putrefaciens (strain CN-32 / ATCC BAA-453).